Reading from the N-terminus, the 303-residue chain is Nitrogenase iron protein (303 aa).

11 to 18 lines the ATP pocket; that stretch reads GKGGIGKS. Residue Cys112 participates in [4Fe-4S] cluster binding. Position 115 is an ADP-ribosylarginine; by dinitrogenase reductase ADP-ribosyltransferase (Arg115). Cys147 contributes to the [4Fe-4S] cluster binding site.

It belongs to the NifH/BchL/ChlL family. As to quaternary structure, homodimer. It depends on [4Fe-4S] cluster as a cofactor. The reversible ADP-ribosylation of Arg-115 inactivates the nitrogenase reductase and regulates nitrogenase activity.

It carries out the reaction N2 + 8 reduced [2Fe-2S]-[ferredoxin] + 16 ATP + 16 H2O = H2 + 8 oxidized [2Fe-2S]-[ferredoxin] + 2 NH4(+) + 16 ADP + 16 phosphate + 6 H(+). Its function is as follows. The key enzymatic reactions in nitrogen fixation are catalyzed by the nitrogenase complex, which has 2 components: the iron protein and the molybdenum-iron protein. In Wolinella succinogenes (strain ATCC 29543 / DSM 1740 / CCUG 13145 / JCM 31913 / LMG 7466 / NCTC 11488 / FDC 602W) (Vibrio succinogenes), this protein is Nitrogenase iron protein.